Reading from the N-terminus, the 203-residue chain is Large ribosomal subunit protein bL25 (203 aa).

This sequence belongs to the bacterial ribosomal protein bL25 family. CTC subfamily. In terms of assembly, part of the 50S ribosomal subunit; part of the 5S rRNA/L5/L18/L25 subcomplex. Contacts the 5S rRNA. Binds to the 5S rRNA independently of L5 and L18.

Its function is as follows. This is one of the proteins that binds to the 5S RNA in the ribosome where it forms part of the central protuberance. This is Large ribosomal subunit protein bL25 from Cereibacter sphaeroides (strain ATCC 17025 / ATH 2.4.3) (Rhodobacter sphaeroides).